Here is a 529-residue protein sequence, read N- to C-terminus: Cytochrome P450 monooxygenase oblE (529 aa).

Residues 38-58 form a helical membrane-spanning segment; the sequence is WQYIVTLLIAIITYDQVMYIW. Cysteine 477 serves as a coordination point for heme.

Belongs to the cytochrome P450 family. Heme serves as cofactor.

It localises to the membrane. The protein operates within secondary metabolite biosynthesis; terpenoid biosynthesis. Cytochrome P450 monooxygenase; part of the gene cluster that mediates the biosynthesis of the sesterterpenes ophiobolins, fungal phytotoxins with potential anti-cancer activities. The first step of the pathway is performed by the sesterterpene synthase oblA that possesses both prenyl transferase and terpene cyclase activity, converting isopentenyl diphosphate and dimethylallyl diphosphate into geranylfarnesyl diphosphate (GFPP) and further converting GFPP into ophiobolin F, respectively. Other sesterterpenoids (C(25) terpenoids) are found as minor products of oblA. The cytochrome P450 monooxygenase oblB then catalyzes a four-step oxidative transformation of ophiobolin F to yield ophiobolin C. The function of the cytochrome P450 monooxygenase oblE has still to be determined. The sequence is that of Cytochrome P450 monooxygenase oblE from Emericella variicolor (Aspergillus stellatus).